A 235-amino-acid chain; its full sequence is Small ribosomal subunit protein eS6 (235 aa).

Ser229 and Ser230 each carry phosphoserine.

It belongs to the eukaryotic ribosomal protein eS6 family. Phosphorylated.

This is Small ribosomal subunit protein eS6 (RPS6) from Kluyveromyces marxianus (Yeast).